The following is an 85-amino-acid chain: Large ribosomal subunit protein bL27 (85 aa).

The disordered stretch occupies residues 1 to 22; sequence MAHKKGASSTRNGRDSNAQRLG. Residues 7 to 19 show a composition bias toward polar residues; it reads ASSTRNGRDSNAQ.

Belongs to the bacterial ribosomal protein bL27 family.

The sequence is that of Large ribosomal subunit protein bL27 from Leifsonia xyli subsp. xyli (strain CTCB07).